Consider the following 640-residue polypeptide: 1-deoxy-D-xylulose-5-phosphate synthase (640 aa).

Residues histidine 78 and glycine 119–serine 121 each bind thiamine diphosphate. Residue aspartate 151 participates in Mg(2+) binding. Residues glycine 152–alanine 153, asparagine 180, tyrosine 289, and glutamate 371 each bind thiamine diphosphate. A Mg(2+)-binding site is contributed by asparagine 180.

The protein belongs to the transketolase family. DXPS subfamily. In terms of assembly, homodimer. It depends on Mg(2+) as a cofactor. Thiamine diphosphate is required as a cofactor.

It carries out the reaction D-glyceraldehyde 3-phosphate + pyruvate + H(+) = 1-deoxy-D-xylulose 5-phosphate + CO2. Its pathway is metabolic intermediate biosynthesis; 1-deoxy-D-xylulose 5-phosphate biosynthesis; 1-deoxy-D-xylulose 5-phosphate from D-glyceraldehyde 3-phosphate and pyruvate: step 1/1. Its function is as follows. Catalyzes the acyloin condensation reaction between C atoms 2 and 3 of pyruvate and glyceraldehyde 3-phosphate to yield 1-deoxy-D-xylulose-5-phosphate (DXP). The chain is 1-deoxy-D-xylulose-5-phosphate synthase from Bartonella henselae (strain ATCC 49882 / DSM 28221 / CCUG 30454 / Houston 1) (Rochalimaea henselae).